The primary structure comprises 354 residues: Uroporphyrinogen decarboxylase (354 aa).

Substrate is bound by residues 27–31 (RQAGR), phenylalanine 46, aspartate 77, tyrosine 153, threonine 208, and histidine 326.

The protein belongs to the uroporphyrinogen decarboxylase family. Homodimer.

Its subcellular location is the cytoplasm. The enzyme catalyses uroporphyrinogen III + 4 H(+) = coproporphyrinogen III + 4 CO2. It participates in porphyrin-containing compound metabolism; protoporphyrin-IX biosynthesis; coproporphyrinogen-III from 5-aminolevulinate: step 4/4. In terms of biological role, catalyzes the decarboxylation of four acetate groups of uroporphyrinogen-III to yield coproporphyrinogen-III. In Neisseria meningitidis serogroup B (strain ATCC BAA-335 / MC58), this protein is Uroporphyrinogen decarboxylase.